The primary structure comprises 182 residues: Pentatricopeptide repeat-containing protein At2g01360 (182 aa).

3 PPR repeats span residues 30 to 64, 65 to 95, and 98 to 132; these read EKSAYLALAGNFLRSNELSKVIDVVKEMVKSQHSL, GVYHGAMLIHMLGFGRRPSLAAEALDLLPDD, and GLSAYTALMDVYISAGSPEKAMKILGEMREREIMP.

Belongs to the PPR family. P subfamily.

This is Pentatricopeptide repeat-containing protein At2g01360 from Arabidopsis thaliana (Mouse-ear cress).